The primary structure comprises 202 residues: Small ribosomal subunit protein uS4 (202 aa).

The interval 16–43 is disordered; the sequence is GELPGLSRKTPRRAYPPGQHGQGRRKRS. The region spanning 90–152 is the S4 RNA-binding domain; that stretch reads MRLDNTVFRL…DNSRRMVETN (63 aa).

It belongs to the universal ribosomal protein uS4 family. As to quaternary structure, part of the 30S ribosomal subunit. Contacts protein S5. The interaction surface between S4 and S5 is involved in control of translational fidelity.

In terms of biological role, one of the primary rRNA binding proteins, it binds directly to 16S rRNA where it nucleates assembly of the body of the 30S subunit. Functionally, with S5 and S12 plays an important role in translational accuracy. This chain is Small ribosomal subunit protein uS4, found in Crocosphaera subtropica (strain ATCC 51142 / BH68) (Cyanothece sp. (strain ATCC 51142)).